The primary structure comprises 737 residues: SANT and BTB domain regulator of class switch recombination (737 aa).

Positions 21 to 59 constitute an SANT domain; it reads DMILYPLIGIPQTINWETVARLVPGLTPKECVKRFDELK. Positions 147-255 constitute a BTB domain; the sequence is MVIHVCDEAK…QCIQYCHKNM (109 aa). Residues 555 to 576 show a composition bias toward acidic residues; the sequence is SEEEEYTTGSEVTEDEVGDEEE. Positions 555–618 are disordered; that stretch reads SEEEEYTTGS…TLEKSTSRDV (64 aa). Residues 580–595 are compositionally biased toward basic residues; the sequence is KQRKKEKPKKFTKPPK. Positions 604–615 are enriched in basic and acidic residues; sequence QKKEKTLEKSTS.

Belongs to the KIAA1841 family. As to quaternary structure, homodimer. Interacts (via the BTB domain) with HDAC1 and NCOR2.

Functionally, negatively regulates class switch recombination or isotype switching in splenic B-cells. The chain is SANT and BTB domain regulator of class switch recombination from Rattus norvegicus (Rat).